A 268-amino-acid polypeptide reads, in one-letter code: Large ribosomal subunit protein bL9m (268 aa).

The transit peptide at 1–52 directs the protein to the mitochondrion; the sequence is MAAAAFAVPRGVQLRVLTERLLRGGVRELLRPRLSGSTPGSERDFSLSHSRG.

The protein belongs to the bacterial ribosomal protein bL9 family. In terms of assembly, component of the mitochondrial ribosome large subunit (39S) which comprises a 16S rRNA and about 50 distinct proteins.

It localises to the mitochondrion. The polypeptide is Large ribosomal subunit protein bL9m (MRPL9) (Bos taurus (Bovine)).